A 485-amino-acid chain; its full sequence is UDP-N-acetylmuramate--L-alanine ligase (485 aa).

Residue 120–126 (GSHGKTT) coordinates ATP.

It belongs to the MurCDEF family.

Its subcellular location is the cytoplasm. The enzyme catalyses UDP-N-acetyl-alpha-D-muramate + L-alanine + ATP = UDP-N-acetyl-alpha-D-muramoyl-L-alanine + ADP + phosphate + H(+). Its pathway is cell wall biogenesis; peptidoglycan biosynthesis. In terms of biological role, cell wall formation. This chain is UDP-N-acetylmuramate--L-alanine ligase, found in Rickettsia massiliae (strain Mtu5).